The chain runs to 250 residues: 3-deoxy-manno-octulosonate cytidylyltransferase (250 aa).

The protein belongs to the KdsB family.

It is found in the cytoplasm. It catalyses the reaction 3-deoxy-alpha-D-manno-oct-2-ulosonate + CTP = CMP-3-deoxy-beta-D-manno-octulosonate + diphosphate. The protein operates within nucleotide-sugar biosynthesis; CMP-3-deoxy-D-manno-octulosonate biosynthesis; CMP-3-deoxy-D-manno-octulosonate from 3-deoxy-D-manno-octulosonate and CTP: step 1/1. Its pathway is bacterial outer membrane biogenesis; lipopolysaccharide biosynthesis. Its function is as follows. Activates KDO (a required 8-carbon sugar) for incorporation into bacterial lipopolysaccharide in Gram-negative bacteria. The sequence is that of 3-deoxy-manno-octulosonate cytidylyltransferase from Rhizobium meliloti (strain 1021) (Ensifer meliloti).